The chain runs to 264 residues: Phosphonoacetaldehyde hydrolase (264 aa).

Aspartate 9 (nucleophile) is an active-site residue. 2 residues coordinate Mg(2+): aspartate 9 and alanine 11. Lysine 50 functions as the Schiff-base intermediate with substrate in the catalytic mechanism. Position 183 (aspartate 183) interacts with Mg(2+).

Belongs to the HAD-like hydrolase superfamily. PhnX family. Homodimer. Requires Mg(2+) as cofactor.

The enzyme catalyses phosphonoacetaldehyde + H2O = acetaldehyde + phosphate + H(+). Its function is as follows. Involved in phosphonate degradation. The polypeptide is Phosphonoacetaldehyde hydrolase (Bacillus cereus (strain ATCC 14579 / DSM 31 / CCUG 7414 / JCM 2152 / NBRC 15305 / NCIMB 9373 / NCTC 2599 / NRRL B-3711)).